The sequence spans 124 residues: Kinocilin (124 aa).

2 helical membrane passes run 13–33 (LQLA…GISV) and 40–60 (MGGV…YPFL). Residues 80 to 124 (PHPGADHGEGRSSTNGNKEGARSSLSTVSRTLEKLKPGTRGAEEC) form a disordered region. Residues 90–109 (RSSTNGNKEGARSSLSTVSR) are compositionally biased toward polar residues. Positions 110–124 (TLEKLKPGTRGAEEC) are enriched in basic and acidic residues.

Its subcellular location is the membrane. Its function is as follows. May play a role in stabilizing dense microtubular networks or in vesicular trafficking. This chain is Kinocilin (KNCN), found in Homo sapiens (Human).